Reading from the N-terminus, the 359-residue chain is MNTPRVVVAGGGTAGHIEPALAVAESLRHRGAEVVALGTTKGLETSIVPERGFELRLINPVPVPRKINADLFKLPFRLLATISQTRKILKEFDTDVVIGFGGYVAAPAYIAAKLQKIPFIVHEANARSGMANKLGVRLGGMGLNAVANSGMPGTVVGIPIRSSLSGDNTALDRAQQLWGLDPEKKTILITGGSQGARSINAAVAEGIDAVLADPDVQVLHAYGRKNSAPEAQERYVPVAYIDDMAAAYAIADLVIGRSGAMTVAENTAAGIPAIYVPLPHGNGEQGLNAQPLVEEGAAVLVADSEFNGEAFSSLAAKILGDQETYNTMVIAAKESGTANAAETIADIIYSIVKNHDRNK.

Residues 13–15, Asn-125, Arg-161, Ser-193, Ile-241, and Gln-285 each bind UDP-N-acetyl-alpha-D-glucosamine; that span reads TAG.

Belongs to the glycosyltransferase 28 family. MurG subfamily.

It is found in the cell membrane. The enzyme catalyses di-trans,octa-cis-undecaprenyl diphospho-N-acetyl-alpha-D-muramoyl-L-alanyl-D-glutamyl-meso-2,6-diaminopimeloyl-D-alanyl-D-alanine + UDP-N-acetyl-alpha-D-glucosamine = di-trans,octa-cis-undecaprenyl diphospho-[N-acetyl-alpha-D-glucosaminyl-(1-&gt;4)]-N-acetyl-alpha-D-muramoyl-L-alanyl-D-glutamyl-meso-2,6-diaminopimeloyl-D-alanyl-D-alanine + UDP + H(+). The protein operates within cell wall biogenesis; peptidoglycan biosynthesis. Cell wall formation. Catalyzes the transfer of a GlcNAc subunit on undecaprenyl-pyrophosphoryl-MurNAc-pentapeptide (lipid intermediate I) to form undecaprenyl-pyrophosphoryl-MurNAc-(pentapeptide)GlcNAc (lipid intermediate II). This Corynebacterium diphtheriae (strain ATCC 700971 / NCTC 13129 / Biotype gravis) protein is UDP-N-acetylglucosamine--N-acetylmuramyl-(pentapeptide) pyrophosphoryl-undecaprenol N-acetylglucosamine transferase.